A 599-amino-acid polypeptide reads, in one-letter code: Sulfite reductase [NADPH] flavoprotein alpha-component (599 aa).

The 139-residue stretch at 64 to 202 (VTLISASQTG…AASEWRARVV (139 aa)) folds into the Flavodoxin-like domain. Residues 70–75 (SQTGNA), 117–120 (STQG), and 153–162 (LGDTSYEFFC) each bind FMN. Residues 234–448 (DAPLIATLSV…IEHNDNFRLP (215 aa)) enclose the FAD-binding FR-type domain. Residues Thr-322, Ala-356, 386 to 389 (RLYS), 404 to 406 (TVG), Tyr-410, and 419 to 422 (GGAS) each bind FAD. NADP(+) is bound by residues 519 to 520 (SR), 525 to 529 (KIYVQ), and Asp-561. Tyr-599 contacts FAD.

The protein belongs to the NADPH-dependent sulphite reductase flavoprotein subunit CysJ family. In the N-terminal section; belongs to the flavodoxin family. It in the C-terminal section; belongs to the flavoprotein pyridine nucleotide cytochrome reductase family. In terms of assembly, alpha(8)-beta(8). The alpha component is a flavoprotein, the beta component is a hemoprotein. FAD is required as a cofactor. The cofactor is FMN.

The enzyme catalyses hydrogen sulfide + 3 NADP(+) + 3 H2O = sulfite + 3 NADPH + 4 H(+). Its pathway is sulfur metabolism; hydrogen sulfide biosynthesis; hydrogen sulfide from sulfite (NADPH route): step 1/1. Its function is as follows. Component of the sulfite reductase complex that catalyzes the 6-electron reduction of sulfite to sulfide. This is one of several activities required for the biosynthesis of L-cysteine from sulfate. The flavoprotein component catalyzes the electron flow from NADPH -&gt; FAD -&gt; FMN to the hemoprotein component. The polypeptide is Sulfite reductase [NADPH] flavoprotein alpha-component (Salmonella typhimurium (strain LT2 / SGSC1412 / ATCC 700720)).